A 450-amino-acid polypeptide reads, in one-letter code: Probable malate:quinone oxidoreductase (450 aa).

This sequence belongs to the MQO family. It depends on FAD as a cofactor.

It catalyses the reaction (S)-malate + a quinone = a quinol + oxaloacetate. Its pathway is carbohydrate metabolism; tricarboxylic acid cycle; oxaloacetate from (S)-malate (quinone route): step 1/1. The chain is Probable malate:quinone oxidoreductase from Helicobacter pylori (strain P12).